The chain runs to 308 residues: Putative mitochondrial transporter UCP3 (308 aa).

The Mitochondrial intermembrane portion of the chain corresponds to 1 to 10; sequence MVGLQPSEVP. The chain crosses the membrane as a helical span at residues 11–32; sequence PTTVVKFLGAGTAACFADLLTF. Solcar repeat units follow at residues 11–102, 111–202, and 211–296; these read PTTV…VKQF, SSVA…IKEK, and DNFP…LKRA. The Mitochondrial matrix portion of the chain corresponds to 33–73; it reads PLDTAKVRLQIQGENPGAQSVQYRGVLGTILTMVRTEGPRS. Residues 74–96 form a helical membrane-spanning segment; the sequence is PYSGLVAGLHRQMSFASIRIGLY. At 97-116 the chain is on the mitochondrial intermembrane side; the sequence is DSVKQFYTPKGADHSSVAIR. Residues 117–133 traverse the membrane as a helical segment; it reads ILAGCTTGAMAVTCAQP. Residues 134–179 lie on the Mitochondrial matrix side of the membrane; that stretch reads TDVVKVRFQAMIRLGTGGERKYRGTMDAYRTIAREEGVRGLWKGTW. The chain crosses the membrane as a helical span at residues 180–196; that stretch reads PNITRNAIVNCAEMVTY. The Mitochondrial intermembrane segment spans residues 197–213; that stretch reads DIIKEKLLESHLFTDNF. A helical transmembrane segment spans residues 214–233; that stretch reads PCHFVSAFGAGFCATVVASP. Topologically, residues 234 to 267 are mitochondrial matrix; that stretch reads VDVVKTRYMNAPLGRYRSPLHCMLKMVAQEGPTA. Residues 268–290 form a helical membrane-spanning segment; it reads FYKGFVPSFLRLGAWNVMMFVTY. Positions 275-297 are purine nucleotide binding; that stretch reads SFLRLGAWNVMMFVTYEQLKRAL. At 291–308 the chain is on the mitochondrial intermembrane side; it reads EQLKRALMKVQVLRESPF.

The protein belongs to the mitochondrial carrier (TC 2.A.29) family. As to quaternary structure, interacts with HAX1; the interaction is direct and calcium-dependent.

Its subcellular location is the mitochondrion inner membrane. Its activity is regulated as follows. Inhibited by purine nucleotides and inorganic phosphate (in vitro). Putative transmembrane transporter that plays a role in mitochondrial metabolism via an as yet unclear mechanism. Originally, this mitochondrial protein was thought to act as a proton transmembrane transporter from the mitochondrial intermembrane space into the matrix, causing proton leaks through the inner mitochondrial membrane, thereby uncoupling mitochondrial membrane potential generation from ATP synthesis. However, this function is controversial and uncoupling may not be the function, or at least not the main function, but rather a consequence of more conventional metabolite transporter activity. The chain is Putative mitochondrial transporter UCP3 from Mus musculus (Mouse).